The sequence spans 977 residues: Disks large-associated protein 3 (977 aa).

Positions 1–10 (MRGYHGDRGS) are enriched in basic and acidic residues. Disordered regions lie at residues 1 to 30 (MRGY…PAAR), 52 to 90 (AGLG…SSTF), 137 to 167 (FHTL…ESPS), 181 to 289 (AKSH…CLDA), 398 to 417 (AMGD…SPKA), and 529 to 582 (PGSS…SADG). A compositionally biased stretch (low complexity) spans 53-73 (GLGHLSPEGPLSLSEGPSSVG). Serine 58 carries the post-translational modification Phosphoserine. Residues 74-85 (PEGGPGGVGAGG) are compositionally biased toward gly residues. Residues 189–201 (PGKRDYNGPKAEG) show a composition bias toward basic and acidic residues. The segment covering 202-212 (RSSSGGDSYSG) has biased composition (low complexity). The span at 221-245 (SHHHHHHHHHHHHQSRHGKRSKSKD) shows a compositional bias: basic residues. Positions 258 to 271 (GWWSSDDNLDSDSG) are enriched in low complexity. Phosphoserine is present on residues serine 404, serine 407, serine 410, and serine 414. Over residues 538–547 (APPPIPPGSQ) the composition is skewed to pro residues. 2 positions are modified to phosphoserine: serine 641 and serine 643. Disordered regions lie at residues 739 to 788 (EGYP…RTSP) and 906 to 939 (EEKK…RQRQ). Residues 754-763 (PGPPPVPAPG) show a composition bias toward pro residues. 2 stretches are compositionally biased toward basic and acidic residues: residues 767-777 (GRRDSWMERGS) and 925-939 (PVKE…RQRQ). Residues serine 930, serine 933, and serine 965 each carry the phosphoserine modification.

It belongs to the SAPAP family. Interacts with DLG1 and DLG4/PSD-95. As to expression, expressed in most brain regions.

Its subcellular location is the cell membrane. The protein localises to the postsynaptic density. The protein resides in the synapse. May play a role in the molecular organization of synapses and neuronal cell signaling. Could be an adapter protein linking ion channel to the subsynaptic cytoskeleton. May induce enrichment of PSD-95/SAP90 at the plasma membrane. This is Disks large-associated protein 3 (Dlgap3) from Rattus norvegicus (Rat).